The chain runs to 394 residues: A-type flagellin (394 aa).

Belongs to the bacterial flagellin family. Post-translationally, phosphorylated on tyrosine residue(s). Flagellin from strain 5939 but not from strain 170018 is glycosylated.

It is found in the secreted. Its subcellular location is the bacterial flagellum. Functionally, flagellin is the subunit protein which polymerizes to form the filaments of bacterial flagella. This chain is A-type flagellin (fliC), found in Pseudomonas aeruginosa.